We begin with the raw amino-acid sequence, 441 residues long: Damage-control phosphatase ARMT1 (441 aa).

Ala-2 carries the N-acetylalanine modification. Residue Lys-40 is modified to N6-acetyllysine. At Ser-102 the chain carries Phosphoserine. Mn(2+)-binding residues include Asp-253 and Asn-254. Position 253 to 254 (253 to 254) interacts with substrate; that stretch reads DN. Glu-258 and Asp-291 together coordinate S-adenosyl-L-methionine. Position 291 (Asp-291) interacts with Mn(2+). Residues 367-371 and Lys-404 contribute to the substrate site; that span reads DLNYR. Positions 401 to 404 match the Subfamily III RTxK motif motif; that stretch reads RTLK.

This sequence belongs to the damage-control phosphatase family. Sugar phosphate phosphatase III subfamily. It depends on Mn(2+) as a cofactor. Ni(2+) serves as cofactor. Post-translationally, automethylated.

The catalysed reaction is beta-D-fructose 1-phosphate + H2O = D-fructose + phosphate. It catalyses the reaction beta-D-fructose 6-phosphate = dihydroxyacetone + D-glyceraldehyde 3-phosphate. It carries out the reaction L-glutamyl-[protein] + S-adenosyl-L-methionine = [protein]-L-glutamate 5-O-methyl ester + S-adenosyl-L-homocysteine. In terms of biological role, metal-dependent phosphatase that shows phosphatase activity against several substrates, including fructose-1-phosphate and fructose-6-phosphate. Its preference for fructose-1-phosphate, a strong glycating agent that causes DNA damage rather than a canonical yeast metabolite, suggests a damage-control function in hexose phosphate metabolism. Has also been shown to have O-methyltransferase activity that methylates glutamate residues of target proteins to form gamma-glutamyl methyl ester residues. Possibly methylates PCNA, suggesting it is involved in the DNA damage response. This is Damage-control phosphatase ARMT1 from Macaca fascicularis (Crab-eating macaque).